The sequence spans 261 residues: Triosephosphate isomerase (261 aa).

10–12 lines the substrate pocket; that stretch reads NWK. The Electrophile role is filled by His-100. The active-site Proton acceptor is Glu-172. Substrate-binding positions include Gly-178, Ser-218, and 239–240; that span reads GG.

It belongs to the triosephosphate isomerase family. In terms of assembly, homodimer.

It is found in the cytoplasm. The catalysed reaction is D-glyceraldehyde 3-phosphate = dihydroxyacetone phosphate. The protein operates within carbohydrate biosynthesis; gluconeogenesis. It functions in the pathway carbohydrate degradation; glycolysis; D-glyceraldehyde 3-phosphate from glycerone phosphate: step 1/1. Its function is as follows. Involved in the gluconeogenesis. Catalyzes stereospecifically the conversion of dihydroxyacetone phosphate (DHAP) to D-glyceraldehyde-3-phosphate (G3P). This is Triosephosphate isomerase from Mycobacteroides abscessus (strain ATCC 19977 / DSM 44196 / CCUG 20993 / CIP 104536 / JCM 13569 / NCTC 13031 / TMC 1543 / L948) (Mycobacterium abscessus).